The primary structure comprises 989 residues: Autotransporter adhesin/invasin TibA (989 aa).

The signal sequence occupies residues 1–54; the sequence is MNKVYNTVWNESTGTWVVTSELTRKGGLRPRQIKRTVLAGLIAGLLMPSMPALA. Residues Ser74, Ser86, Ser93, Ser94, Ser97, Ser100, Ser112, Ser113, Ser116, Ser119, Ser124, Ser131, Ser132, and Ser135 are each glycosylated (O-alpha-linked (D-glycero-D-manno-heptose) serine). 12 repeat units span residues 82-100, 101-119, 120-138, 139-157, 158-176, 177-195, 196-214, 215-233, 234-251, 252-270, 271-289, and 290-308. Residues 82–308 are 12 X 19 AA approximate repeats; it reads TTINSGGKQY…QVEAGGSASK (227 aa). Polar residues predominate over residues 110-123; it reads HVSSGGSATSSTIN. Residues 110–146 are disordered; it reads HVSSGGSATSSTINSGGHQHVSSGGSATNTTVNNGGR. Low complexity predominate over residues 124–135; that stretch reads SGGHQHVSSGGS. Positions 136–146 are enriched in polar residues; it reads ATNTTVNNGGR. O-alpha-linked (D-glycero-D-manno-heptose) serine glycosylation is found at Ser151, Ser154, Ser162, Ser170, Ser176, Ser181, Ser188, Ser189, Ser200, Ser226, Ser227, Ser230, Ser238, Ser248, Ser263, Ser264, Ser275, Ser294, Ser305, Ser313, and Ser322. The segment at 623–686 is disordered; the sequence is WYLKADTPPP…GTSSSPVRRT (64 aa). Residues 629–638 are compositionally biased toward pro residues; that stretch reads TPPPVTPPTN. Repeat copies occupy residues 639-643, 644-648, 649-653, 654-658, 659-663, 664-668, 669-673, and 674-678. Residues 639–667 are compositionally biased toward low complexity; it reads PDADNPDAGNPDAGNPDAGNPDAGNPDAG. The tract at residues 639–678 is 8 X 5 AA repeats of P-[DG]-[AGT]-[DGA]-[NKT]; sequence PDADNPDAGNPDAGNPDAGNPDAGNPDAGKPGTGKPDAGT. Positions 721–989 constitute an Autotransporter domain; sequence NTRAPGGVWG…TGGVGFRINF (269 aa).

Homohexamer. In terms of processing, glycosylated by TibC. Glycosylation is required for adhesion to and invasion of host cells. Glycosylation is dispensable for bacterial autoaggregation and biofilm formation.

It localises to the cell outer membrane. Functionally, mediates both adhesion to and invasion of human intestine epithelial cells. Also mediates bacterial cell aggregation via intercellular TibA-TibA interaction. Enhances biofilm formation. This Escherichia coli O78:H11 (strain H10407 / ETEC) protein is Autotransporter adhesin/invasin TibA.